Here is a 540-residue protein sequence, read N- to C-terminus: Chaperonin GroEL (540 aa).

Residues 30–33 (TLGP), Lys51, 87–91 (DGTTT), Gly415, 479–481 (NAA), and Asp495 each bind ATP.

The protein belongs to the chaperonin (HSP60) family. In terms of assembly, forms a cylinder of 14 subunits composed of two heptameric rings stacked back-to-back. Interacts with the co-chaperonin GroES.

The protein localises to the cytoplasm. The enzyme catalyses ATP + H2O + a folded polypeptide = ADP + phosphate + an unfolded polypeptide.. Its function is as follows. Together with its co-chaperonin GroES, plays an essential role in assisting protein folding. The GroEL-GroES system forms a nano-cage that allows encapsulation of the non-native substrate proteins and provides a physical environment optimized to promote and accelerate protein folding. This is Chaperonin GroEL from Raoultella planticola (Klebsiella planticola).